The sequence spans 92 residues: Small ribosomal subunit protein uS19 (92 aa).

This sequence belongs to the universal ribosomal protein uS19 family.

Its function is as follows. Protein S19 forms a complex with S13 that binds strongly to the 16S ribosomal RNA. This is Small ribosomal subunit protein uS19 from Xanthobacter autotrophicus (strain ATCC BAA-1158 / Py2).